Here is a 404-residue protein sequence, read N- to C-terminus: MQDKNVKIQGNLVRVHLSGSFLKFQAIYKVKKLYLQLLILSVIAFFWGLLGVVFVQFSGLYDIGIASISQGLARLADYLIRSNKVSVDADTIYNVIFWLSQILINIPLFVLGWYKISKKFTLLTLYFVVVSNVFGFAFSYIPGVENFFLFANLTELTKANGGLEQAINNQGVQLIFWEQTAEKQISLMFYALIWGFLQAVFYSVILIIDASSGGLDFLAFWYSEKKHKDIGGILFIVNTLSFLIGYTIGTYLTGSLLAQGFQEDRQKPFGVAFFLSPNLVFTIFMNIILGIFTSYFFPKYQFVKVEVYGKHMEQMRNYLLSSNQSFAVTMFEVEGGYSRQKNQVLVTNCLFTKTAELLEAVRRVDPDALFSITFIKKLDGYIYERKAPDKVVPPVKDPVKAQEN.

6 consecutive transmembrane segments (helical) span residues 37–57 (LLIL…FVQF), 92–112 (IYNV…FVLG), 122–142 (LLTL…SYIP), 188–208 (MFYA…ILII), 230–250 (IGGI…TIGT), and 272–292 (AFFL…LGIF).

It is found in the cell membrane. This is an uncharacterized protein from Mycoplasma pneumoniae (strain ATCC 29342 / M129 / Subtype 1) (Mycoplasmoides pneumoniae).